A 180-amino-acid polypeptide reads, in one-letter code: Large ribosomal subunit protein uL10 (180 aa).

The protein belongs to the universal ribosomal protein uL10 family. As to quaternary structure, part of the ribosomal stalk of the 50S ribosomal subunit. The N-terminus interacts with L11 and the large rRNA to form the base of the stalk. The C-terminus forms an elongated spine to which L12 dimers bind in a sequential fashion forming a multimeric L10(L12)X complex.

Its function is as follows. Forms part of the ribosomal stalk, playing a central role in the interaction of the ribosome with GTP-bound translation factors. This chain is Large ribosomal subunit protein uL10 (rplJ), found in Treponema pallidum (strain Nichols).